The sequence spans 405 residues: Zinc finger protein ubi-d4 (405 aa).

Disordered regions lie at residues 80–147, 165–194, 210–230, and 248–280; these read RKKR…GEFP, DDLD…GGAR, ACDN…VCGK, and AEEE…PDGL. Basic and acidic residues-rich tracts occupy residues 100–110 and 126–140; these read PDTDQTLKKEG and DPLE…RMDD. The span at 165 to 174 shows a compositional bias: acidic residues; it reads DDLDDEDYEE. A C2H2-type; atypical zinc finger spans residues 209 to 246; the sequence is YACDNSYKQKHSLKPPDRVCGKRYKNRPGLSYHYAHSH. Positions 267-277 are enriched in basic and acidic residues; the sequence is RSEEQKSKKGP. PHD-type zinc fingers lie at residues 284–344 and 341–391; these read NNYC…CKCC and CKCC…CLDL.

The protein belongs to the requiem/DPF family.

Its subcellular location is the cytoplasm. It localises to the nucleus. Functionally, may be a transcription factor required for the apoptosis response following survival factor withdrawal from myeloid cells. Might also have a role in the development and maturation of lymphoid cells. The chain is Zinc finger protein ubi-d4 (REQ) from Gallus gallus (Chicken).